Consider the following 519-residue polypeptide: ATP synthase subunit beta (519 aa).

Positions 1-26 (MAKAATPKRAPARAAAIPAAATPAAK) are enriched in low complexity. The segment at 1 to 40 (MAKAATPKRAPARAAAIPAAATPAAKPAKRASTRSAAARS) is disordered. An ATP-binding site is contributed by 197-204 (GGAGVGKT).

It belongs to the ATPase alpha/beta chains family. As to quaternary structure, F-type ATPases have 2 components, CF(1) - the catalytic core - and CF(0) - the membrane proton channel. CF(1) has five subunits: alpha(3), beta(3), gamma(1), delta(1), epsilon(1). CF(0) has three main subunits: a(1), b(2) and c(9-12). The alpha and beta chains form an alternating ring which encloses part of the gamma chain. CF(1) is attached to CF(0) by a central stalk formed by the gamma and epsilon chains, while a peripheral stalk is formed by the delta and b chains.

The protein localises to the cell inner membrane. The catalysed reaction is ATP + H2O + 4 H(+)(in) = ADP + phosphate + 5 H(+)(out). Produces ATP from ADP in the presence of a proton gradient across the membrane. The catalytic sites are hosted primarily by the beta subunits. This Chelativorans sp. (strain BNC1) protein is ATP synthase subunit beta.